The sequence spans 210 residues: Pyridoxine/pyridoxamine 5'-phosphate oxidase (210 aa).

Substrate contacts are provided by residues 7-10 and Lys-65; that span reads REDY. FMN contacts are provided by residues 60–65, 75–76, Arg-81, Lys-82, and Gln-104; these read RMVLLK and FT. Residues Tyr-122, Arg-126, and Ser-130 each contribute to the substrate site. FMN contacts are provided by residues 139-140 and Trp-183; that span reads QS. 189 to 191 provides a ligand contact to substrate; that stretch reads RLH. Arg-193 serves as a coordination point for FMN.

It belongs to the pyridoxamine 5'-phosphate oxidase family. As to quaternary structure, homodimer. FMN is required as a cofactor.

The catalysed reaction is pyridoxamine 5'-phosphate + O2 + H2O = pyridoxal 5'-phosphate + H2O2 + NH4(+). It catalyses the reaction pyridoxine 5'-phosphate + O2 = pyridoxal 5'-phosphate + H2O2. It participates in cofactor metabolism; pyridoxal 5'-phosphate salvage; pyridoxal 5'-phosphate from pyridoxamine 5'-phosphate: step 1/1. It functions in the pathway cofactor metabolism; pyridoxal 5'-phosphate salvage; pyridoxal 5'-phosphate from pyridoxine 5'-phosphate: step 1/1. Its function is as follows. Catalyzes the oxidation of either pyridoxine 5'-phosphate (PNP) or pyridoxamine 5'-phosphate (PMP) into pyridoxal 5'-phosphate (PLP). The protein is Pyridoxine/pyridoxamine 5'-phosphate oxidase of Neisseria meningitidis serogroup B (strain ATCC BAA-335 / MC58).